Here is a 726-residue protein sequence, read N- to C-terminus: uncharacterized protein (726 aa).

Catalysis depends on charge relay system residues serine 583 and histidine 698.

This sequence belongs to the peptidase S9B family.

This is an uncharacterized protein from Sinorhizobium fredii (strain NBRC 101917 / NGR234).